Consider the following 167-residue polypeptide: Ubiquitin-fold modifier-conjugating enzyme 1 (167 aa).

Cys116 serves as the catalytic Glycyl thioester intermediate.

It belongs to the ubiquitin-conjugating enzyme family. UFC1 subfamily. Interacts with UBA5 (via C-terminus). Interacts with UFL1. Interacts with UFM1.

Its function is as follows. E2-like enzyme which specifically catalyzes the second step in ufmylation. Accepts the ubiquitin-like modifier UFM1 from the E1 enzyme UBA5 and forms an intermediate with UFM1 via a thioester linkage. Ufmylation is involved in various processes, such as ribosome recycling, response to DNA damage, interferon response or reticulophagy (also called ER-phagy). The chain is Ubiquitin-fold modifier-conjugating enzyme 1 from Esox lucius (Northern pike).